Here is a 199-residue protein sequence, read N- to C-terminus: Probable GTP-binding protein EngB (199 aa).

Residues 28–199 (DLPEIALAGR…ESWDTILEYL (172 aa)) enclose the EngB-type G domain. Residues 36 to 43 (GRSNVGKS), 63 to 67 (GKTQL), 81 to 84 (DVPG), 148 to 151 (TKAD), and 180 to 182 (FSS) contribute to the GTP site. The Mg(2+) site is built by Ser43 and Thr65.

The protein belongs to the TRAFAC class TrmE-Era-EngA-EngB-Septin-like GTPase superfamily. EngB GTPase family. It depends on Mg(2+) as a cofactor.

Functionally, necessary for normal cell division and for the maintenance of normal septation. The polypeptide is Probable GTP-binding protein EngB (Streptococcus equi subsp. equi (strain 4047)).